Reading from the N-terminus, the 420-residue chain is Pre-mRNA-splicing factor RBM22 (420 aa).

N-acetylalanine is present on A2. Residues S4 and S102 each carry the phosphoserine modification. Residues K139 and K149 each participate in a glycyl lysine isopeptide (Lys-Gly) (interchain with G-Cter in SUMO2) cross-link. The segment at 159-186 (RNRPHICSFWVKGECKRGEECPYRHEKP) adopts a C3H1-type zinc-finger fold. At K212 the chain carries N6-acetyllysine. In terms of domain architecture, RRM spans 232–305 (TTLYVGGLGD…RRLNVKWGRS (74 aa)). K290 participates in a covalent cross-link: Glycyl lysine isopeptide (Lys-Gly) (interchain with G-Cter in SUMO2). Disordered regions lie at residues 303–343 (GRSQ…AAEE) and 372–420 (APPP…HSSP). Residues 309 to 318 (RGKEKEKDGT) are compositionally biased toward basic and acidic residues.

The protein belongs to the SLT11 family. In terms of assembly, component of the pre-catalytic and catalytic spliceosome complexes. Component of the postcatalytic spliceosome P complex. Interacts with PDCD6; the interaction induces translocation of PDCD6 in the cytoplasm. Interacts with PPIL1.

The protein resides in the nucleus. It localises to the cytoplasm. Required for pre-mRNA splicing as component of the activated spliceosome. Involved in the first step of pre-mRNA splicing. Binds directly to the internal stem-loop (ISL) domain of the U6 snRNA and to the pre-mRNA intron near the 5' splice site during the activation and catalytic phases of the spliceosome cycle. Involved in both translocations of the nuclear SLU7 to the cytoplasm and the cytosolic calcium-binding protein PDCD6 to the nucleus upon cellular stress responses. The protein is Pre-mRNA-splicing factor RBM22 (RBM22) of Homo sapiens (Human).